The primary structure comprises 217 residues: Adenylate kinase (217 aa).

10 to 15 is a binding site for ATP; it reads GAGKGT. The segment at 30–59 is NMP; it reads STGDMFRAAMKEETPLGLEAKSYIDKGELV. AMP-binding positions include threonine 31, arginine 36, 57-59, 85-88, and glutamine 92; these read ELV and GFPR. Positions 126-163 are LID; the sequence is GRRICSVCGTTYHLVFNPPKTPGICDKDGGELYQRADD. Residue arginine 127 participates in ATP binding. Zn(2+)-binding residues include cysteine 130 and cysteine 133. An ATP-binding site is contributed by 136 to 137; that stretch reads TY. Residues cysteine 150 and aspartate 153 each contribute to the Zn(2+) site. Residues arginine 160 and arginine 171 each contribute to the AMP site. ATP is bound at residue glutamine 199.

The protein belongs to the adenylate kinase family. Monomer.

The protein resides in the cytoplasm. The catalysed reaction is AMP + ATP = 2 ADP. It functions in the pathway purine metabolism; AMP biosynthesis via salvage pathway; AMP from ADP: step 1/1. Functionally, catalyzes the reversible transfer of the terminal phosphate group between ATP and AMP. Plays an important role in cellular energy homeostasis and in adenine nucleotide metabolism. The polypeptide is Adenylate kinase (Bacillus subtilis (strain 168)).